The following is a 190-amino-acid chain: Somatotropin (190 aa).

Residue His-19 coordinates Zn(2+). A disulfide bridge links Cys-52 with Cys-163. Ser-105 is modified (phosphoserine). Residue Glu-172 participates in Zn(2+) binding. Cys-180 and Cys-188 are oxidised to a cystine.

This sequence belongs to the somatotropin/prolactin family.

It is found in the secreted. In terms of biological role, plays an important role in growth control. Its major role in stimulating body growth is to stimulate the liver and other tissues to secrete IGF1. It stimulates both the differentiation and proliferation of myoblasts. It also stimulates amino acid uptake and protein synthesis in muscle and other tissues. This is Somatotropin (GH1) from Vulpes vulpes (Red fox).